A 504-amino-acid polypeptide reads, in one-letter code: D-alanine--D-alanyl carrier protein ligase (504 aa).

152 to 153 (TS) contacts ATP. Asp-197 is a D-alanine binding site. 292 to 297 (NTYGPT) is an ATP binding site. Position 301 (Val-301) interacts with D-alanine. Residues Asp-383, 394–397 (YNGR), and Lys-492 each bind ATP. Lys-492 lines the D-alanine pocket.

It belongs to the ATP-dependent AMP-binding enzyme family. DltA subfamily.

The protein localises to the cytoplasm. The enzyme catalyses holo-[D-alanyl-carrier protein] + D-alanine + ATP = D-alanyl-[D-alanyl-carrier protein] + AMP + diphosphate. It participates in cell wall biogenesis; lipoteichoic acid biosynthesis. Catalyzes the first step in the D-alanylation of lipoteichoic acid (LTA), the activation of D-alanine and its transfer onto the D-alanyl carrier protein (Dcp) DltC. In an ATP-dependent two-step reaction, forms a high energy D-alanyl-AMP intermediate, followed by transfer of the D-alanyl residue as a thiol ester to the phosphopantheinyl prosthetic group of the Dcp. D-alanylation of LTA plays an important role in modulating the properties of the cell wall in Gram-positive bacteria, influencing the net charge of the cell wall. The protein is D-alanine--D-alanyl carrier protein ligase of Bacillus thuringiensis (strain Al Hakam).